Consider the following 238-residue polypeptide: Small ribosomal subunit protein uS2 (238 aa).

Belongs to the universal ribosomal protein uS2 family.

The sequence is that of Small ribosomal subunit protein uS2 from Actinobacillus pleuropneumoniae serotype 7 (strain AP76).